The primary structure comprises 355 residues: Inositol polyphosphate multikinase (355 aa).

Residue Met-1 is modified to N-acetylmethionine. Lys-31 serves as a coordination point for ATP. At Ser-97 the chain carries Phosphoserine. ATP contacts are provided by residues 118–120 (ENL) and Asp-131. Residue 127–135 (PNILDIKLG) participates in substrate binding. Residues Glu-271 and Asn-274 each coordinate Ca(2+). The span at 284–304 (FIDDDDDDDDNDDDDDDDAEG) shows a compositional bias: acidic residues. Residues 284–317 (FIDDDDDDDDNDDDDDDDAEGSSEGPKDKKTTGS) are disordered. Residue Asp-325 coordinates ATP. Gly-334 serves as a coordination point for Ca(2+).

Belongs to the inositol phosphokinase (IPK) family. In terms of assembly, interacts with ARG80 and MCM1. Requires Ca(2+) as cofactor.

It is found in the nucleus. It carries out the reaction 1D-myo-inositol 1,4,5-trisphosphate + 2 ATP = 1D-myo-inositol 1,3,4,5,6-pentakisphosphate + 2 ADP + 2 H(+). The catalysed reaction is 1D-myo-inositol 1,4,5-trisphosphate + ATP = 1D-myo-inositol 1,4,5,6-tetrakisphosphate + ADP + H(+). It catalyses the reaction 1D-myo-inositol 1,4,5-trisphosphate + ATP = 1D-myo-inositol 1,3,4,5-tetrakisphosphate + ADP + H(+). The enzyme catalyses 1D-myo-inositol 1,4,5,6-tetrakisphosphate + ATP = 1D-myo-inositol 1,3,4,5,6-pentakisphosphate + ADP + H(+). It carries out the reaction a 1,2-diacyl-sn-glycero-3-phospho-(1D-myo-inositol-4,5-bisphosphate) + ATP = a 1,2-diacyl-sn-glycero-3-phospho-(1D-myo-inositol-3,4,5-trisphosphate) + ADP + H(+). Its function is as follows. Inositol phosphate kinase with both monophosphoinositol and diphosphoinositol polyphosphate synthase activities. Able to phosphorylate inositol 1,4,5-trisphosphate (Ins(1,4,5)P3) on both the carbon-3 and carbon-6 positions to synthesize inositol 1,3,4,5-tetrakisphosphate (Ins(1,3,4,5)P4) and inositol 1,4,5,6-tetrakisphosphate (Ins(1,4,5,6)P4), and then to subsequently phosphorylate and convert either isomer of InsP4 to inositol 1,3,4,5,6-pentakisphosphate (Ins(1,3,4,5,6)P5). Its predominant in vivo catalytic function is to convert Ins(1,4,5)P3 to Ins(1,4,5,6)P4 to Ins(1,3,4,5,6)P5 via 6- and 3-kinase activities. It can also use Ins(1,3,4,5,6)P5 as a substrate and act as a diphosphoinositol polyphosphate synthase to generate two different isomers of PP-InsP4. Also has a role in transcription regulation. Forms a complex with ARG80, ARG81 and MCM1 (ArgR-MCM1), which coordinates the expression of arginine anabolic and catabolic genes in response to arginine. Recruits ARG80 and MCM21 to stabilize them. Neither the kinase activity nor inositol phosphates are required for the formation of ArgR-MCM1 transcriptional complexes on DNA promoter elements and the control of arginine metabolism. In contrast, only the catalytic activity is required for PHO gene repression by phosphate and for NCR gene activation in response to nitrogen availability, indicating a role for inositol pyrophosphates in these controls. Inositol polyphosphates may be involved in the regulation of chromatin remodeling of transcription. Regulates nuclear mRNA export via inositol phosphate metabolism. Also has lipid kinase activity, transforming the lipid inositol phosphatidylinositol 4,5-bisphosphate (PI(4,5)P2) into phosphatidylinositol 3,4,5-trisphosphate (PI(3,4,5)P3) in the nucleus. Its kinase activity is necessary for the propagation of most [PSI+] prion variants. This is Inositol polyphosphate multikinase (ARG82) from Saccharomyces cerevisiae (strain ATCC 204508 / S288c) (Baker's yeast).